The sequence spans 339 residues: uncharacterized protein (339 aa).

The 95-residue stretch at 17 to 111 folds into the Rhodanese domain; sequence VRGEIKCLDV…WEDLSLPQNE (95 aa).

This is an uncharacterized protein from Schizosaccharomyces pombe (strain 972 / ATCC 24843) (Fission yeast).